The chain runs to 490 residues: UDP-N-acetylmuramoyl-L-alanyl-D-glutamate--2,6-diaminopimelate ligase (490 aa).

UDP-N-acetyl-alpha-D-muramoyl-L-alanyl-D-glutamate-binding positions include Leu-22, Ser-24, and 39-41; that span reads HQT. 111 to 117 contributes to the ATP binding site; it reads GTNGKTT. UDP-N-acetyl-alpha-D-muramoyl-L-alanyl-D-glutamate-binding positions include Asn-152, 153-154, Ser-180, Gln-186, and Arg-188; that span reads TT. N6-carboxylysine is present on Lys-220. Residues Arg-385, 409–412, Gly-460, and Glu-464 each bind meso-2,6-diaminopimelate; that span reads DNPR. Residues 409 to 412 carry the Meso-diaminopimelate recognition motif motif; it reads DNPR.

It belongs to the MurCDEF family. MurE subfamily. Requires Mg(2+) as cofactor. Carboxylation is probably crucial for Mg(2+) binding and, consequently, for the gamma-phosphate positioning of ATP.

It is found in the cytoplasm. It catalyses the reaction UDP-N-acetyl-alpha-D-muramoyl-L-alanyl-D-glutamate + meso-2,6-diaminopimelate + ATP = UDP-N-acetyl-alpha-D-muramoyl-L-alanyl-gamma-D-glutamyl-meso-2,6-diaminopimelate + ADP + phosphate + H(+). The protein operates within cell wall biogenesis; peptidoglycan biosynthesis. Functionally, catalyzes the addition of meso-diaminopimelic acid to the nucleotide precursor UDP-N-acetylmuramoyl-L-alanyl-D-glutamate (UMAG) in the biosynthesis of bacterial cell-wall peptidoglycan. In Yersinia pestis, this protein is UDP-N-acetylmuramoyl-L-alanyl-D-glutamate--2,6-diaminopimelate ligase.